We begin with the raw amino-acid sequence, 185 residues long: Acireductone dioxygenase (185 aa).

A disordered region spans residues 1–22 (MSRLSIHPEGSTNATSPAEPLL). Residues His102, His104, Glu108, and His146 each coordinate Fe(2+). 4 residues coordinate Ni(2+): His102, His104, Glu108, and His146.

The protein belongs to the acireductone dioxygenase (ARD) family. As to quaternary structure, monomer. Fe(2+) serves as cofactor. The cofactor is Ni(2+).

It carries out the reaction 1,2-dihydroxy-5-(methylsulfanyl)pent-1-en-3-one + O2 = 3-(methylsulfanyl)propanoate + CO + formate + 2 H(+). The enzyme catalyses 1,2-dihydroxy-5-(methylsulfanyl)pent-1-en-3-one + O2 = 4-methylsulfanyl-2-oxobutanoate + formate + 2 H(+). Its pathway is amino-acid biosynthesis; L-methionine biosynthesis via salvage pathway; L-methionine from S-methyl-5-thio-alpha-D-ribose 1-phosphate: step 5/6. Catalyzes 2 different reactions between oxygen and the acireductone 1,2-dihydroxy-3-keto-5-methylthiopentene (DHK-MTPene) depending upon the metal bound in the active site. Fe-containing acireductone dioxygenase (Fe-ARD) produces formate and 2-keto-4-methylthiobutyrate (KMTB), the alpha-ketoacid precursor of methionine in the methionine recycle pathway. Ni-containing acireductone dioxygenase (Ni-ARD) produces methylthiopropionate, carbon monoxide and formate, and does not lie on the methionine recycle pathway. The protein is Acireductone dioxygenase of Prochlorococcus marinus (strain MIT 9313).